The sequence spans 157 residues: Class-10 pathogenesis-related protein 1 (157 aa).

This sequence belongs to the BetVI family. High levels in roots and not detectable in hypocotyls, cotyledons, stems, leaves and flower buds of untreated plants. After induction, high levels are present in the vascular bundles of leaves.

Its subcellular location is the cytoplasm. The polypeptide is Class-10 pathogenesis-related protein 1 (MSPR10-1) (Medicago sativa (Alfalfa)).